The chain runs to 127 residues: Small ribosomal subunit protein uS11 (127 aa).

It belongs to the universal ribosomal protein uS11 family. Part of the 30S ribosomal subunit.

In terms of biological role, located on the platform of the 30S subunit. This Picrophilus torridus (strain ATCC 700027 / DSM 9790 / JCM 10055 / NBRC 100828 / KAW 2/3) protein is Small ribosomal subunit protein uS11.